We begin with the raw amino-acid sequence, 314 residues long: MSNQLPVINLMGPTASGKTALACELYERGNFELISVDSALVYKDMDIGTAKPTREEQELYPHHLIDIITPLEVYSAAQFVEDACALIDEMHSRGKTPILVGGTMLYFKALLEGLSSNLPSADANVRAAIEEKAANEGWQAVYDELVAVDPAAGVKFKVSDKQRIIRALEVYRITGQPITKLQAEQPKNVPYRYTFHNYALLPDRLELHQRIEQRLSKMWDIGFLSEVESLIEKYDLDENLPSMRSVGYRQALEFLLKSDMSLKKKQEMEDKALFATRQLAKRQYTWLRSLQEIHDFKTYLTIKQAKEDLRNSYG.

12–19 (GPTASGKT) is an ATP binding site. 14–19 (TASGKT) contacts substrate. 2 interaction with substrate tRNA regions span residues 37–40 (DSAL) and 162–166 (QRIIR).

This sequence belongs to the IPP transferase family. As to quaternary structure, monomer. The cofactor is Mg(2+).

The enzyme catalyses adenosine(37) in tRNA + dimethylallyl diphosphate = N(6)-dimethylallyladenosine(37) in tRNA + diphosphate. Catalyzes the transfer of a dimethylallyl group onto the adenine at position 37 in tRNAs that read codons beginning with uridine, leading to the formation of N6-(dimethylallyl)adenosine (i(6)A). The chain is tRNA dimethylallyltransferase from Acinetobacter baumannii (strain AB0057).